Here is a 280-residue protein sequence, read N- to C-terminus: Probable 2-(5''-triphosphoribosyl)-3'-dephosphocoenzyme-A synthase (280 aa).

This sequence belongs to the CitG/MdcB family.

It catalyses the reaction 3'-dephospho-CoA + ATP = 2'-(5''-triphospho-alpha-D-ribosyl)-3'-dephospho-CoA + adenine. The protein is Probable 2-(5''-triphosphoribosyl)-3'-dephosphocoenzyme-A synthase of Lactiplantibacillus plantarum (strain ATCC BAA-793 / NCIMB 8826 / WCFS1) (Lactobacillus plantarum).